A 512-amino-acid chain; its full sequence is Mucin-13 (512 aa).

Positions 1–18 are cleaved as a signal peptide; that stretch reads MKAIIHLTLLALLSVNTA. Residues 19–421 are Extracellular-facing; sequence TNQGNSADAV…GLDCKDKFQL (403 aa). The span at 22-38 shows a compositional bias: polar residues; it reads GNSADAVTTTETATSGP. 2 disordered regions span residues 22 to 67 and 133 to 176; these read GNSA…PTAT and MVPS…PSNP. The span at 53–67 shows a compositional bias: low complexity; that stretch reads TASTTANTPSFPTAT. Residues 135–176 show a composition bias toward polar residues; that stretch reads PSETQSNNEMSPTTEDNQSSGPPTGTALLETSTLNSTGPSNP. 2 N-linked (GlcNAc...) asparagine glycosylation sites follow: asparagine 151 and asparagine 169. The EGF-like 1 domain maps to 173–211; the sequence is PSNPCQDDPCADNSLCVKLHNTSFCLCLEGYYYNSSTCK. Disulfide bonds link cysteine 177/cysteine 188, cysteine 182/cysteine 197, and cysteine 199/cysteine 210. Asparagine 193, asparagine 206, asparagine 284, and asparagine 332 each carry an N-linked (GlcNAc...) asparagine glycan. The SEA domain occupies 212–336; sequence KGKVFPGKIS…DYYGCNQTAD (125 aa). EGF-like domains lie at 322-361 and 363-404; these read LTLR…PFCV and SSLK…GNCQ. 6 disulfides stabilise this stretch: cysteine 326-cysteine 338, cysteine 331-cysteine 344, cysteine 346-cysteine 360, cysteine 367-cysteine 378, cysteine 371-cysteine 389, and cysteine 391-cysteine 403. Residues 422–442 form a helical membrane-spanning segment; the sequence is ILTIVGTIAGIVILSMIIALI. Over 443–512 the chain is Cytoplasmic; the sequence is VTARSNNKTK…RHSSMPRPDY (70 aa). A compositionally biased stretch (polar residues) spans 493–505; the sequence is RDSQMQNPYSRHS. Residues 493–512 are disordered; sequence RDSQMQNPYSRHSSMPRPDY.

Homodimer of beta subunits. Post-translationally, cleaved into two subunits, alpha and beta, probably between the first EGF domain and the SEA domain. Beta subunit contains the cytoplasmic tail and alpha subunit the extracellular tail. The homooligomerization into dimers is dependent on intrachain disulfide bonds. In terms of processing, highly N-glycosylated. As to expression, highly expressed in epithelial tissues, particularly those of the gastrointestinal and respiratory tracts, such as large intestine and trachea, followed by kidney, small intestine, appendix and stomach.

Its subcellular location is the cell membrane. It is found in the apical cell membrane. The protein localises to the secreted. Functionally, epithelial and hemopoietic transmembrane mucin that may play a role in cell signaling. The sequence is that of Mucin-13 (MUC13) from Homo sapiens (Human).